The primary structure comprises 118 residues: Heavy metal-associated isoprenylated plant protein 47 (118 aa).

In terms of domain architecture, HMA spans 1-67 (MRIKLSVNSE…KACHVTLETL (67 aa)). Cys115 carries the cysteine methyl ester modification. Residue Cys115 is the site of S-farnesyl cysteine attachment. A propeptide spans 116–118 (LVM) (removed in mature form).

The protein belongs to the HIPP family.

Heavy-metal-binding protein. The sequence is that of Heavy metal-associated isoprenylated plant protein 47 from Arabidopsis thaliana (Mouse-ear cress).